Here is a 300-residue protein sequence, read N- to C-terminus: Ribosomal protein L11 methyltransferase (300 aa).

S-adenosyl-L-methionine contacts are provided by Thr152, Gly173, Asp195, and Asn234.

It belongs to the methyltransferase superfamily. PrmA family.

The protein localises to the cytoplasm. It carries out the reaction L-lysyl-[protein] + 3 S-adenosyl-L-methionine = N(6),N(6),N(6)-trimethyl-L-lysyl-[protein] + 3 S-adenosyl-L-homocysteine + 3 H(+). Its function is as follows. Methylates ribosomal protein L11. The chain is Ribosomal protein L11 methyltransferase from Burkholderia lata (strain ATCC 17760 / DSM 23089 / LMG 22485 / NCIMB 9086 / R18194 / 383).